We begin with the raw amino-acid sequence, 182 residues long: Superoxide dismutase [Cu-Zn] (182 aa).

A signal peptide spans methionine 1 to alanine 19. Cysteine 20 is lipidated: N-palmitoyl cysteine. Cysteine 20 is lipidated: S-diacylglycerol cysteine. Positions 69, 71, and 95 each coordinate Cu cation. A disulfide bridge connects residues cysteine 76 and cysteine 175. Residues alanine 91 to aspartate 118 form a disordered region. Zn(2+)-binding residues include histidine 95, histidine 104, histidine 115, and aspartate 118. Residues histidine 102–histidine 115 show a composition bias toward basic and acidic residues.

This sequence belongs to the Cu-Zn superoxide dismutase family. Requires Cu cation as cofactor. Zn(2+) is required as a cofactor.

It localises to the cell membrane. It catalyses the reaction 2 superoxide + 2 H(+) = H2O2 + O2. Its function is as follows. Destroys radicals which are normally produced within the cells and which are toxic to biological systems. The chain is Superoxide dismutase [Cu-Zn] (sodC) from Deinococcus radiodurans (strain ATCC 13939 / DSM 20539 / JCM 16871 / CCUG 27074 / LMG 4051 / NBRC 15346 / NCIMB 9279 / VKM B-1422 / R1).